We begin with the raw amino-acid sequence, 339 residues long: Glycerol-3-phosphate dehydrogenase [NAD(P)+] (339 aa).

4 residues coordinate NADPH: S14, Y15, H35, and K109. 3 residues coordinate sn-glycerol 3-phosphate: K109, G138, and T140. A142 contributes to the NADPH binding site. 5 residues coordinate sn-glycerol 3-phosphate: K194, D247, S257, R258, and N259. K194 functions as the Proton acceptor in the catalytic mechanism. Position 258 (R258) interacts with NADPH. NADPH contacts are provided by V282 and E284.

Belongs to the NAD-dependent glycerol-3-phosphate dehydrogenase family.

The protein resides in the cytoplasm. The catalysed reaction is sn-glycerol 3-phosphate + NAD(+) = dihydroxyacetone phosphate + NADH + H(+). It catalyses the reaction sn-glycerol 3-phosphate + NADP(+) = dihydroxyacetone phosphate + NADPH + H(+). Its pathway is membrane lipid metabolism; glycerophospholipid metabolism. Functionally, catalyzes the reduction of the glycolytic intermediate dihydroxyacetone phosphate (DHAP) to sn-glycerol 3-phosphate (G3P), the key precursor for phospholipid synthesis. This is Glycerol-3-phosphate dehydrogenase [NAD(P)+] from Shewanella amazonensis (strain ATCC BAA-1098 / SB2B).